The sequence spans 173 residues: Ribulose bisphosphate carboxylase small subunit, chloroplastic 7 (173 aa).

The transit peptide at 1 to 49 (MASIPATVATVAQANMVAPFTGLKSNAAFPVTKKVNDFSTLASNGGRVQ) directs the protein to the chloroplast.

Belongs to the RuBisCO small chain family. As to quaternary structure, heterohexadecamer of 8 large and 8 small subunits.

Its subcellular location is the plastid. The protein resides in the chloroplast. RuBisCO catalyzes two reactions: the carboxylation of D-ribulose 1,5-bisphosphate, the primary event in carbon dioxide fixation, as well as the oxidative fragmentation of the pentose substrate. Both reactions occur simultaneously and in competition at the same active site. Although the small subunit is not catalytic it is essential for maximal activity. This chain is Ribulose bisphosphate carboxylase small subunit, chloroplastic 7, found in Flaveria pringlei.